Here is a 58-residue protein sequence, read N- to C-terminus: Protein translocase subunit SecE (58 aa).

A helical membrane pass occupies residues 36 to 56 (ILLIGFIGFLMFAIMSLLPGV).

Belongs to the SecE/SEC61-gamma family. Component of the Sec protein translocase complex. Heterotrimer consisting of SecY (alpha), SecG (beta) and SecE (gamma) subunits. The heterotrimers can form oligomers, although 1 heterotrimer is thought to be able to translocate proteins. Interacts with the ribosome. May interact with SecDF, and other proteins may be involved.

The protein resides in the cell membrane. Its function is as follows. Essential subunit of the Sec protein translocation channel SecYEG. Clamps together the 2 halves of SecY. May contact the channel plug during translocation. The sequence is that of Protein translocase subunit SecE from Halorubrum lacusprofundi (strain ATCC 49239 / DSM 5036 / JCM 8891 / ACAM 34).